A 207-amino-acid chain; its full sequence is Glycerol-3-phosphate acyltransferase (207 aa).

Helical transmembrane passes span 4-24 (VVAT…SFAV), 58-78 (ILTL…AQWL), 86-106 (ETGI…PVFH), 120-140 (ILLA…LIIA), and 162-182 (VLMN…VLLI).

Belongs to the PlsY family. In terms of assembly, probably interacts with PlsX.

The protein resides in the cell inner membrane. The enzyme catalyses an acyl phosphate + sn-glycerol 3-phosphate = a 1-acyl-sn-glycero-3-phosphate + phosphate. The protein operates within lipid metabolism; phospholipid metabolism. Catalyzes the transfer of an acyl group from acyl-phosphate (acyl-PO(4)) to glycerol-3-phosphate (G3P) to form lysophosphatidic acid (LPA). This enzyme utilizes acyl-phosphate as fatty acyl donor, but not acyl-CoA or acyl-ACP. This chain is Glycerol-3-phosphate acyltransferase, found in Ralstonia pickettii (strain 12J).